A 569-amino-acid polypeptide reads, in one-letter code: Aspartokinase 1, chloroplastic (569 aa).

The transit peptide at 1–90 directs the protein to the chloroplast; the sequence is MAATRVRCCH…VDEKGITCVM (90 aa). Positions 91, 94, and 123 each coordinate ATP. Glu207 contacts substrate. 2 consecutive ACT domains span residues 405–483 and 484–560; these read IAST…AIIS and LIGN…GNGS. L-lysine contacts are provided by Gln413 and Gly415. Residue Ser430 participates in S-adenosyl-L-methionine binding. Residues Val431, Asp432, and Ser437 each coordinate L-lysine. S-adenosyl-L-methionine contacts are provided by Ser452 and Arg453.

The protein belongs to the aspartokinase family. Homodimer.

The protein localises to the plastid. It localises to the chloroplast. The enzyme catalyses L-aspartate + ATP = 4-phospho-L-aspartate + ADP. The protein operates within amino-acid biosynthesis; L-lysine biosynthesis via DAP pathway; (S)-tetrahydrodipicolinate from L-aspartate: step 1/4. Its pathway is amino-acid biosynthesis; L-methionine biosynthesis via de novo pathway; L-homoserine from L-aspartate: step 1/3. It functions in the pathway amino-acid biosynthesis; L-threonine biosynthesis; L-threonine from L-aspartate: step 1/5. Inhibited by S-adenosyl-L-methionine (SAM) and lysine in a synergistic manner. No inhibition by threonine, leucine or SAM alone, and no activation or inhibition by alanine, cysteine, isoleucine, serine, valine, methionine, glutamine, asparagine, glutamic acid or arginine. Its function is as follows. Involved in the first step of essential amino acids lysine, threonine, methionine and isoleucine synthesis via the aspartate-family pathway. This chain is Aspartokinase 1, chloroplastic (AK1), found in Arabidopsis thaliana (Mouse-ear cress).